Reading from the N-terminus, the 77-residue chain is U8-lycotoxin-Ls1d (77 aa).

Residues Met1 to Ala20 form the signal peptide. The propeptide occupies Gln21–Lys26.

Belongs to the neurotoxin 19 (CSTX) family. 08 (U8-Lctx) subfamily. In terms of processing, contains 4 disulfide bonds. Expressed by the venom gland.

It localises to the secreted. The polypeptide is U8-lycotoxin-Ls1d (Lycosa singoriensis (Wolf spider)).